We begin with the raw amino-acid sequence, 120 residues long: Large ribosomal subunit protein uL18 (120 aa).

This sequence belongs to the universal ribosomal protein uL18 family. In terms of assembly, part of the 50S ribosomal subunit; part of the 5S rRNA/L5/L18/L25 subcomplex. Contacts the 5S and 23S rRNAs.

Its function is as follows. This is one of the proteins that bind and probably mediate the attachment of the 5S RNA into the large ribosomal subunit, where it forms part of the central protuberance. In Sinorhizobium medicae (strain WSM419) (Ensifer medicae), this protein is Large ribosomal subunit protein uL18.